The sequence spans 59 residues: Preprotein translocase subunit SecG (59 aa).

The Cytoplasmic portion of the chain corresponds to 1 to 33 (MARRESSGGSGGLMSSAGLMRYFEAEESAIKID). The helical transmembrane segment at 34 to 55 (PKTVIIAAVASGAFIWILNFTY) threads the bilayer. Residues 56–59 (GRFW) are Extracellular-facing.

Belongs to the SEC61-beta family. Component of the protein translocase complex. Heterotrimer consisting of alpha (SecY), beta (SecG) and gamma (SecE) subunits. Can form oligomers of the heterotrimer.

Its subcellular location is the cell membrane. Its function is as follows. Involved in protein export. The function of the beta subunit is unknown, but it may be involved in stabilization of the trimeric complex. The protein is Preprotein translocase subunit SecG of Methanocella arvoryzae (strain DSM 22066 / NBRC 105507 / MRE50).